Here is a 362-residue protein sequence, read N- to C-terminus: MGSSFGHLFRISTFGESHGGGVGVVIDGCPPRLEISEAEIQFELDRRRPGQSKITTPRKEADQCEILSGVVDGKTLDTPIAIVVRNKDQRSQDYSEMQVAYRPSHADATYDAKYGIRAVAGGGRSSARETIGRVAAGAIAKKLLREIAGVEIVGYVKRIKDLEGQIDPETVTLEQVESTIVRCPDEAIAPQMIDLIEAIGREGDSLGGVVECVARRVPRGLGEPVFDKLEADLAKACMSLPATKGFEIGSGFAGTEMTGSEHNDAFYTDEQGQIRTRTNRSGGTQGGISNGENIVIRVAFKPTATIRKEQETVTNSGEATTLAARGRHDPCVLPRAVPMVEAMVALVLCDHLLRQQAQCSWW.

R47 contributes to the NADP(+) binding site. FMN is bound by residues 124 to 126 (RSS), G286, 301 to 305 (KPTAT), and R327.

Belongs to the chorismate synthase family. In terms of assembly, homotetramer. Requires FMNH2 as cofactor.

The enzyme catalyses 5-O-(1-carboxyvinyl)-3-phosphoshikimate = chorismate + phosphate. The protein operates within metabolic intermediate biosynthesis; chorismate biosynthesis; chorismate from D-erythrose 4-phosphate and phosphoenolpyruvate: step 7/7. In terms of biological role, catalyzes the anti-1,4-elimination of the C-3 phosphate and the C-6 proR hydrogen from 5-enolpyruvylshikimate-3-phosphate (EPSP) to yield chorismate, which is the branch point compound that serves as the starting substrate for the three terminal pathways of aromatic amino acid biosynthesis. This reaction introduces a second double bond into the aromatic ring system. The chain is Chorismate synthase from Synechococcus sp. (strain ATCC 27144 / PCC 6301 / SAUG 1402/1) (Anacystis nidulans).